We begin with the raw amino-acid sequence, 358 residues long: Photosystem II protein D1 3 (358 aa).

Transmembrane regions (helical) follow at residues 28-45, 117-132, and 141-155; these read YIGW…AATT, HFLI…QWEL, and WICV…AAMA. A chlorophyll a-binding site is contributed by histidine 117. Tyrosine 125 is a binding site for pheophytin a. [CaMn4O5] cluster-binding residues include aspartate 169 and glutamate 188. Residues 196 to 217 traverse the membrane as a helical segment; the sequence is FHMLGVAGVFGGSLFSAMHGSL. Chlorophyll a is bound at residue histidine 197. Residues histidine 214 and 263 to 264 each bind a quinone; that span reads SF. Histidine 214 is a Fe cation binding site. Histidine 271 provides a ligand contact to Fe cation. The helical transmembrane segment at 273-287 threads the bilayer; sequence LLGAWPVVGIWFTSM. [CaMn4O5] cluster contacts are provided by histidine 331, glutamate 332, aspartate 341, and alanine 343. A propeptide spanning residues 344-358 is cleaved from the precursor; the sequence is TVESTPVALQAPAIG.

It belongs to the reaction center PufL/M/PsbA/D family. As to quaternary structure, PSII is composed of 1 copy each of membrane proteins PsbA, PsbB, PsbC, PsbD, PsbE, PsbF, PsbH, PsbI, PsbJ, PsbK, PsbL, PsbM, PsbT, PsbX, PsbY, PsbZ, Psb30/Ycf12, peripheral proteins PsbO, CyanoQ (PsbQ), PsbU, PsbV and a large number of cofactors. It forms dimeric complexes. The D1/D2 heterodimer binds P680, chlorophylls that are the primary electron donor of PSII, and subsequent electron acceptors. It shares a non-heme iron and each subunit binds pheophytin, quinone, additional chlorophylls, carotenoids and lipids. D1 provides most of the ligands for the Mn4-Ca-O5 cluster of the oxygen-evolving complex (OEC). There is also a Cl(-1) ion associated with D1 and D2, which is required for oxygen evolution. The PSII complex binds additional chlorophylls, carotenoids and specific lipids. serves as cofactor. In terms of processing, tyr-160 forms a radical intermediate that is referred to as redox-active TyrZ, YZ or Y-Z. Post-translationally, C-terminally processed by CtpA; processing is essential to allow assembly of the oxygen-evolving complex and thus photosynthetic growth.

Its subcellular location is the cellular thylakoid membrane. The enzyme catalyses 2 a plastoquinone + 4 hnu + 2 H2O = 2 a plastoquinol + O2. Photosystem II (PSII) is a light-driven water:plastoquinone oxidoreductase that uses light energy to abstract electrons from H(2)O, generating O(2) and a proton gradient subsequently used for ATP formation. It consists of a core antenna complex that captures photons, and an electron transfer chain that converts photonic excitation into a charge separation. The D1/D2 (PsbA/PsbD) reaction center heterodimer binds P680, the primary electron donor of PSII as well as several subsequent electron acceptors. This is Photosystem II protein D1 3 from Synechococcus sp. (strain CC9311).